Here is a 234-residue protein sequence, read N- to C-terminus: Large ribosomal subunit protein uL1 (234 aa).

The protein belongs to the universal ribosomal protein uL1 family. As to quaternary structure, part of the 50S ribosomal subunit.

Its function is as follows. Binds directly to 23S rRNA. The L1 stalk is quite mobile in the ribosome, and is involved in E site tRNA release. Functionally, protein L1 is also a translational repressor protein, it controls the translation of the L11 operon by binding to its mRNA. The protein is Large ribosomal subunit protein uL1 of Corynebacterium aurimucosum (strain ATCC 700975 / DSM 44827 / CIP 107346 / CN-1) (Corynebacterium nigricans).